Here is a 71-residue protein sequence, read N- to C-terminus: Small ribosomal subunit protein bS18 (71 aa).

It belongs to the bacterial ribosomal protein bS18 family. As to quaternary structure, part of the 30S ribosomal subunit. Forms a tight heterodimer with protein bS6.

Binds as a heterodimer with protein bS6 to the central domain of the 16S rRNA, where it helps stabilize the platform of the 30S subunit. This is Small ribosomal subunit protein bS18 from Nostoc punctiforme (strain ATCC 29133 / PCC 73102).